Reading from the N-terminus, the 246-residue chain is MSRGSGAGYDRHITIFSPEGRLFQVEYAFKAVKAAGITSIGVRGKDSVCVVTQKKVPDKLLDQSSVSHLFPVTKYLGLLATGMTADSRSLVQQARNEAAEFRFQYGYEMPADILAKWIADKSQVYTQHAYMRPLGVVAMVLGIDEERGPLLYKCDPAGHFYGHKATSAGMKEQEAVNFLEKKMKENPAFTYDETVQTAISALQSVLQEDFKATEIEVGVVRADDPLFRSLRTEEIDEHLTAISERD.

It belongs to the peptidase T1A family. In terms of assembly, component of the 20S core complex of the 26S proteasome. The 26S proteasome is composed of a core protease (CP), known as the 20S proteasome, capped at one or both ends by the 19S regulatory particle (RP/PA700). The 20S proteasome core is composed of 28 subunits that are arranged in four stacked rings, resulting in a barrel-shaped structure. The two end rings are each formed by seven alpha subunits, and the two central rings are each formed by seven beta subunits. The catalytic chamber with the active sites is on the inside of the barrel.

The protein resides in the cytoplasm. It is found in the nucleus. Functionally, the proteasome is a multicatalytic proteinase complex which is characterized by its ability to cleave peptides with Arg, Phe, Tyr, Leu, and Glu adjacent to the leaving group at neutral or slightly basic pH. The proteasome has an ATP-dependent proteolytic activity. The protein is Proteasome subunit alpha type-6-B (PAA2) of Arabidopsis thaliana (Mouse-ear cress).